The following is a 316-amino-acid chain: Acetylglutamate kinase (316 aa).

Substrate is bound by residues 65-66 (GG), arginine 87, and asparagine 179.

This sequence belongs to the acetylglutamate kinase family. ArgB subfamily.

It is found in the cytoplasm. The catalysed reaction is N-acetyl-L-glutamate + ATP = N-acetyl-L-glutamyl 5-phosphate + ADP. It functions in the pathway amino-acid biosynthesis; L-arginine biosynthesis; N(2)-acetyl-L-ornithine from L-glutamate: step 2/4. Catalyzes the ATP-dependent phosphorylation of N-acetyl-L-glutamate. The chain is Acetylglutamate kinase from Alkaliphilus metalliredigens (strain QYMF).